The chain runs to 2340 residues: Proto-oncogene tyrosine-protein kinase ROS (2340 aa).

An N-terminal signal peptide occupies residues 1-28 (MKNICWLTLKLVKFVVLGCIIWISVAQS). Topologically, residues 29-1854 (TVLSSCLTSC…EDGVWITETS (1826 aa)) are extracellular. N-linked (GlcNAc...) asparagine glycosylation occurs at Asn53. 2 consecutive Fibronectin type-III domains span residues 111–206 (LPTA…VPET) and 207–295 (APLI…PSPS). N-linked (GlcNAc...) asparagine glycosylation is found at Asn334 and Asn362. In terms of domain architecture, Fibronectin type-III 3 spans 567 to 667 (LPGHPQEVSV…APSVGTTLVP (101 aa)). Residues Asn935 and Asn1011 are each glycosylated (N-linked (GlcNAc...) asparagine). Fibronectin type-III domains follow at residues 943-1038 (IPDP…SVPS) and 1039-1146 (APEN…TSEI). Asn1243 carries an N-linked (GlcNAc...) asparagine glycan. Fibronectin type-III domains are found at residues 1442 to 1549 (ASDM…TKSG), 1550 to 1649 (VPGA…VNMF), 1651 to 1744 (TPEK…TKAG), and 1745 to 1846 (VPSK…LVED). A glycan (N-linked (GlcNAc...) asparagine) is linked at Asn1676. The chain crosses the membrane as a helical span at residues 1855-1875 (FILTIIVGIFLVATVPLTFVW). Residues 1876–2340 (HRSLKSHKAS…AHSEHGDVSE (465 aa)) lie on the Cytoplasmic side of the membrane. In terms of domain architecture, Protein kinase spans 1938-2216 (LSLRLLLGSG…QLQLFRNVFL (279 aa)). Residues 1944-1952 (LGSGAFGEV) and Lys1973 contribute to the ATP site. The active-site Proton acceptor is Asp2072. Phosphotyrosine; by autocatalysis occurs at positions 2267 and 2327.

The protein belongs to the protein kinase superfamily. Tyr protein kinase family. Insulin receptor subfamily. As to quaternary structure, interacts with PTPN11; may activate the PI3 kinase-mTOR signaling pathway. Interacts with VAV3; constitutive interaction mediating VAV3 phosphorylation. Interacts with PTPN6 (via SH2 1 domain); the interaction is direct and promotes ROS1 dephosphorylation. Phosphorylated. Probably autophosphorylates. Phosphorylation at Tyr-2267 and/or Tyr-2327 recruits PTPN11. Phosphorylation at Tyr-2267 is required for the interaction with PTPN6 that mediates ROS1 dephosphorylation. Phosphorylation at Tyr-2267 stimulates the kinase activity and the activation of the ERK1 signaling cascade. In terms of tissue distribution, expressed by epithelial cells of the caput epididymis (at protein level).

Its subcellular location is the cell membrane. The catalysed reaction is L-tyrosyl-[protein] + ATP = O-phospho-L-tyrosyl-[protein] + ADP + H(+). Inhibited by dephosphorylation by PTPN6. Functionally, receptor tyrosine kinase (RTK) that plays a role in epithelial cell differentiation and regionalization of the proximal epididymal epithelium. NELL2 is an endogenous ligand for ROS1. Upon endogenous stimulation by NELL2, ROS1 activates the intracellular signaling pathway and triggers epididymal epithelial differentiation and subsequent sperm maturation. May activate several downstream signaling pathways related to cell differentiation, proliferation, growth and survival including the PI3 kinase-mTOR signaling pathway. Mediates the phosphorylation of PTPN11, an activator of this pathway. May also phosphorylate and activate the transcription factor STAT3 to control anchorage-independent cell growth. Mediates the phosphorylation and the activation of VAV3, a guanine nucleotide exchange factor regulating cell morphology. May activate other downstream signaling proteins including AKT1, MAPK1, MAPK3, IRS1, and PLCG2. This Mus musculus (Mouse) protein is Proto-oncogene tyrosine-protein kinase ROS (Ros1).